The primary structure comprises 321 residues: Oxidoreductase P35 (321 aa).

The protein belongs to the Gfo/Idh/MocA family.

The protein resides in the cell surface. Its function is as follows. Oxidoreductase that may be involved in ulvan degradation. Ulvan is the main polysaccharide component of the Ulvales (green seaweed) cell wall. It is composed of disaccharide building blocks comprising 3-sulfated rhamnose (Rha3S) linked to D-glucuronic acid (GlcA), L-iduronic acid (IduA), or D-xylose (Xyl). In Formosa agariphila (strain DSM 15362 / KCTC 12365 / LMG 23005 / KMM 3901 / M-2Alg 35-1), this protein is Oxidoreductase P35.